The chain runs to 214 residues: uncharacterized protein (214 aa).

Helical transmembrane passes span 19-39 (IAIFALAFISFILILIISYIL) and 50-70 (LALFLMDNLYSILLKIFLLIG).

It localises to the cell membrane. This is an uncharacterized protein from Methanocaldococcus jannaschii (strain ATCC 43067 / DSM 2661 / JAL-1 / JCM 10045 / NBRC 100440) (Methanococcus jannaschii).